Consider the following 110-residue polypeptide: Large ribosomal subunit protein uL22 (110 aa).

It belongs to the universal ribosomal protein uL22 family. As to quaternary structure, part of the 50S ribosomal subunit.

This protein binds specifically to 23S rRNA; its binding is stimulated by other ribosomal proteins, e.g. L4, L17, and L20. It is important during the early stages of 50S assembly. It makes multiple contacts with different domains of the 23S rRNA in the assembled 50S subunit and ribosome. In terms of biological role, the globular domain of the protein is located near the polypeptide exit tunnel on the outside of the subunit, while an extended beta-hairpin is found that lines the wall of the exit tunnel in the center of the 70S ribosome. In Idiomarina loihiensis (strain ATCC BAA-735 / DSM 15497 / L2-TR), this protein is Large ribosomal subunit protein uL22.